The sequence spans 533 residues: L-aspartate oxidase (533 aa).

FAD is bound by residues 16-19, lysine 38, 45-52, and aspartate 223; these read SGAA and ATFYAQGG. Arginine 290 serves as the catalytic Proton donor/acceptor. FAD contacts are provided by residues glutamate 375 and 391 to 392; that span reads SL.

Belongs to the FAD-dependent oxidoreductase 2 family. NadB subfamily. FAD is required as a cofactor.

It is found in the cytoplasm. It catalyses the reaction L-aspartate + O2 = iminosuccinate + H2O2. It functions in the pathway cofactor biosynthesis; NAD(+) biosynthesis; iminoaspartate from L-aspartate (oxidase route): step 1/1. Catalyzes the oxidation of L-aspartate to iminoaspartate, the first step in the de novo biosynthesis of NAD(+). The sequence is that of L-aspartate oxidase (nadB) from Yersinia pestis.